Consider the following 232-residue polypeptide: Ureidoacrylate amidohydrolase RutB (232 aa).

Residue Asp-26 is the Proton acceptor of the active site. Lys-135 is a catalytic residue. Catalysis depends on Cys-168, which acts as the Nucleophile.

The protein belongs to the isochorismatase family. RutB subfamily.

It catalyses the reaction (Z)-3-ureidoacrylate + H2O + H(+) = (Z)-3-aminoacrylate + NH4(+) + CO2. The catalysed reaction is (Z)-3-ureidoacrylate + H2O = (Z)-3-aminoacrylate + carbamate + H(+). It carries out the reaction (Z)-2-methylureidoacrylate + H2O + H(+) = (Z)-2-methylaminoacrylate + NH4(+) + CO2. In terms of biological role, hydrolyzes ureidoacrylate to form aminoacrylate and carbamate. The carbamate hydrolyzes spontaneously, thereby releasing one of the nitrogen atoms of the pyrimidine ring as ammonia and one of its carbon atoms as CO2. This Cronobacter turicensis (strain DSM 18703 / CCUG 55852 / LMG 23827 / z3032) protein is Ureidoacrylate amidohydrolase RutB.